The chain runs to 373 residues: Sterol-4-alpha-carboxylate 3-dehydrogenase, decarboxylating (373 aa).

Residue M1 is modified to N-acetylmethionine. A Phosphothreonine modification is found at T22. Y172 acts as the Proton acceptor in catalysis. Residue K176 coordinates NAD(+). Residues 298 to 318 (WVAYYLALLLSLLVMVISPVI) form a helical membrane-spanning segment. The Prevents secretion from ER motif lies at 370-373 (RRVK).

The protein belongs to the 3-beta-HSD family. In terms of assembly, homodimer. In terms of tissue distribution, brain, heart, liver, lung, kidney, skin and placenta.

It localises to the endoplasmic reticulum membrane. The protein localises to the lipid droplet. The enzyme catalyses a 3beta-hydroxysteroid-4alpha-carboxylate + NADP(+) = a 3-oxosteroid + CO2 + NADPH. It carries out the reaction a 3beta-hydroxysteroid-4alpha-carboxylate + NAD(+) = a 3-oxosteroid + CO2 + NADH. It catalyses the reaction 4alpha-carboxyzymosterol + NADP(+) = zymosterone + CO2 + NADPH. The catalysed reaction is 4alpha-carboxy-4beta-methyl-5alpha-cholest-8-en-3beta-ol + NADP(+) = 4alpha-methyl-5alpha-cholest-8-en-3-one + CO2 + NADPH. The enzyme catalyses 4alpha-carboxy-5alpha-cholest-8-ene-3beta-ol + NADP(+) = 5alpha-cholest-8-en-3-one + CO2 + NADPH. It carries out the reaction 4beta-methylzymosterol-4alpha-carboxylate + NADP(+) = 3-dehydro-4-methylzymosterol + CO2 + NADPH. It catalyses the reaction 4beta-methylzymosterol-4alpha-carboxylate + NAD(+) = 3-dehydro-4-methylzymosterol + CO2 + NADH. The catalysed reaction is 4alpha-carboxy-5alpha-cholest-8-ene-3beta-ol + NAD(+) = 5alpha-cholest-8-en-3-one + CO2 + NADH. The enzyme catalyses 4alpha-carboxy-4beta-methyl-5alpha-cholest-8-en-3beta-ol + NAD(+) = 4alpha-methyl-5alpha-cholest-8-en-3-one + CO2 + NADH. It carries out the reaction 4alpha-carboxyzymosterol + NAD(+) = zymosterone + CO2 + NADH. The protein operates within steroid biosynthesis; zymosterol biosynthesis; zymosterol from lanosterol: step 4/6. In terms of biological role, catalyzes the NAD(P)(+)-dependent oxidative decarboxylation of the C4 methyl groups of 4-alpha-carboxysterols in post-squalene cholesterol biosynthesis. Also plays a role in the regulation of the endocytic trafficking of EGFR. The protein is Sterol-4-alpha-carboxylate 3-dehydrogenase, decarboxylating (NSDHL) of Homo sapiens (Human).